A 711-amino-acid polypeptide reads, in one-letter code: Polyribonucleotide nucleotidyltransferase (711 aa).

The Mg(2+) site is built by Asp-486 and Asp-492. The 60-residue stretch at 553-612 folds into the KH domain; that stretch reads PRIHTIKINPDKIKDVIGKGGSVIRALTEETGTTIEIEDDGTVKIAATDGEKAKHAIRRI. An S1 motif domain is found at 622–690; it reads GRVYTGKVTR…RQGRIRLSIK (69 aa). The interval 689–711 is disordered; it reads IKEATEQSQPAAAPEAPAAEQGE. Positions 694–711 are enriched in low complexity; that stretch reads EQSQPAAAPEAPAAEQGE.

Belongs to the polyribonucleotide nucleotidyltransferase family. Component of the RNA degradosome, which is a multiprotein complex involved in RNA processing and mRNA degradation. Requires Mg(2+) as cofactor.

The protein localises to the cytoplasm. The catalysed reaction is RNA(n+1) + phosphate = RNA(n) + a ribonucleoside 5'-diphosphate. Functionally, involved in mRNA degradation. Catalyzes the phosphorolysis of single-stranded polyribonucleotides processively in the 3'- to 5'-direction. This Shigella boydii serotype 4 (strain Sb227) protein is Polyribonucleotide nucleotidyltransferase.